A 219-amino-acid polypeptide reads, in one-letter code: Intraflagellar transport protein 22 (219 aa).

Residues 12–19 (GPSKSGKS) and 72–79 (WDVGGSSK) contribute to the GTP site.

It belongs to the small GTPase superfamily. Rab family.

It is found in the cytoplasm. Its subcellular location is the cytoskeleton. The protein localises to the flagellum basal body. It localises to the cell projection. The protein resides in the cilium. It is found in the flagellum. Required for flagellum formation. This is Intraflagellar transport protein 22 (IFT22) from Trypanosoma brucei brucei (strain 927/4 GUTat10.1).